A 676-amino-acid polypeptide reads, in one-letter code: DNA ligase (676 aa).

NAD(+) contacts are provided by residues 35–39, 84–85, and glutamate 118; these read DYEFD and SL. Lysine 120 acts as the N6-AMP-lysine intermediate in catalysis. Residues arginine 141, glutamate 184, lysine 299, and lysine 323 each contribute to the NAD(+) site. 4 residues coordinate Zn(2+): cysteine 417, cysteine 420, cysteine 435, and cysteine 441. Residues 600-676 enclose the BRCT domain; the sequence is LINRNFEGVN…ISEDEFNAML (77 aa).

Belongs to the NAD-dependent DNA ligase family. LigA subfamily. Requires Mg(2+) as cofactor. It depends on Mn(2+) as a cofactor.

The catalysed reaction is NAD(+) + (deoxyribonucleotide)n-3'-hydroxyl + 5'-phospho-(deoxyribonucleotide)m = (deoxyribonucleotide)n+m + AMP + beta-nicotinamide D-nucleotide.. Its function is as follows. DNA ligase that catalyzes the formation of phosphodiester linkages between 5'-phosphoryl and 3'-hydroxyl groups in double-stranded DNA using NAD as a coenzyme and as the energy source for the reaction. It is essential for DNA replication and repair of damaged DNA. This is DNA ligase from Chlorobium phaeobacteroides (strain DSM 266 / SMG 266 / 2430).